The sequence spans 171 residues: MNEEKEESPSTEAEGAGAEVVNWEERAETYRNDYLRALADIENLRKRHEKQVEDARNYAVDRFARELLPVVDSLELALASPVEGAESIALLRQGLENTLTLFAKALGKAGIAPIEMGEGRFDPHLHQAIAMVETEGEANRVLAVHQKGYVMHDRLLRPSMVSVSKAPKAAQ.

Residues 1-20 (MNEEKEESPSTEAEGAGAEV) are disordered.

This sequence belongs to the GrpE family. As to quaternary structure, homodimer.

It localises to the cytoplasm. In terms of biological role, participates actively in the response to hyperosmotic and heat shock by preventing the aggregation of stress-denatured proteins, in association with DnaK and GrpE. It is the nucleotide exchange factor for DnaK and may function as a thermosensor. Unfolded proteins bind initially to DnaJ; upon interaction with the DnaJ-bound protein, DnaK hydrolyzes its bound ATP, resulting in the formation of a stable complex. GrpE releases ADP from DnaK; ATP binding to DnaK triggers the release of the substrate protein, thus completing the reaction cycle. Several rounds of ATP-dependent interactions between DnaJ, DnaK and GrpE are required for fully efficient folding. The sequence is that of Protein GrpE from Acidithiobacillus ferrooxidans (strain ATCC 23270 / DSM 14882 / CIP 104768 / NCIMB 8455) (Ferrobacillus ferrooxidans (strain ATCC 23270)).